The following is a 137-amino-acid chain: Large-conductance mechanosensitive channel (137 aa).

Residues 1–16 (MSIIKEFREFAMRGNV) are Cytoplasmic-facing. A helical transmembrane segment spans residues 17–45 (VDLAVGVIIGALFGKIVSSLVSDIIMPPL). The Periplasmic segment spans residues 46-74 (GLLIGGVDFKQFALFLRNAQGGIPAVVMN). A helical transmembrane segment spans residues 75–94 (YGAFIQNIFDFIIVAFAIFI). The Cytoplasmic portion of the chain corresponds to 95–137 (AIKLMNKMRCKQEDTPAAPPKPSAEEKLLAEIRDLLKEQQTRQ).

Belongs to the MscL family. As to quaternary structure, homopentamer.

The protein resides in the cell inner membrane. Channel that opens in response to stretch forces in the membrane lipid bilayer. Forms a nonselective ion channel with a conductance of about 4 nanosiemens. May participate in the regulation of osmotic pressure changes within the cell. This chain is Large-conductance mechanosensitive channel, found in Pectobacterium carotovorum (Erwinia carotovora).